A 338-amino-acid polypeptide reads, in one-letter code: Alcohol dehydrogenase (338 aa).

Positions 38, 61, 62, 92, 95, 98, 106, and 148 each coordinate Zn(2+).

This sequence belongs to the zinc-containing alcohol dehydrogenase family. In terms of assembly, homotetramer. Zn(2+) serves as cofactor.

The catalysed reaction is a primary alcohol + NAD(+) = an aldehyde + NADH + H(+). It carries out the reaction a secondary alcohol + NAD(+) = a ketone + NADH + H(+). The enzyme catalyses ethanol + NAD(+) = acetaldehyde + NADH + H(+). It catalyses the reaction 1-propanol + NAD(+) = propanal + NADH + H(+). The catalysed reaction is butan-1-ol + NAD(+) = butanal + NADH + H(+). It carries out the reaction propan-2-ol + NAD(+) = acetone + NADH + H(+). In terms of biological role, psychrophilic alcohol dehydrogenase that exhibits a wide range of substrate specificity, oxidizing mainly primary and secondary aliphatic alcohols, utilizing NAD(+) as a cosubstrate. In vitro, shows highest reaction rates for ethanol as a substrate and gradually decreases its reaction rates as the length and branching of the carbon chain of the alcohol substrates increase. To a lesser extent, is also able to reduce aldehydes and ketones. Do not catalyze the further oxidation of aldehydes to carboxylic acids. Cannot use NADP(+) instead of NAD(+). This chain is Alcohol dehydrogenase, found in Moraxella sp. (strain TAE123).